We begin with the raw amino-acid sequence, 514 residues long: 2-isopropylmalate synthase (514 aa).

The region spanning 5–267 (LVIFDTTLRD…DTRIHTPEIL (263 aa)) is the Pyruvate carboxyltransferase domain. Residues D14, H202, H204, and N238 each coordinate Mn(2+). The regulatory domain stretch occupies residues 394 to 514 (RLVALKVGTQ…GSKEHPQAHV (121 aa)).

The protein belongs to the alpha-IPM synthase/homocitrate synthase family. LeuA type 1 subfamily. As to quaternary structure, homodimer. It depends on Mn(2+) as a cofactor.

It localises to the cytoplasm. The enzyme catalyses 3-methyl-2-oxobutanoate + acetyl-CoA + H2O = (2S)-2-isopropylmalate + CoA + H(+). Its pathway is amino-acid biosynthesis; L-leucine biosynthesis; L-leucine from 3-methyl-2-oxobutanoate: step 1/4. In terms of biological role, catalyzes the condensation of the acetyl group of acetyl-CoA with 3-methyl-2-oxobutanoate (2-ketoisovalerate) to form 3-carboxy-3-hydroxy-4-methylpentanoate (2-isopropylmalate). The polypeptide is 2-isopropylmalate synthase (Hydrogenovibrio crunogenus (strain DSM 25203 / XCL-2) (Thiomicrospira crunogena)).